The primary structure comprises 697 residues: Elongation factor G 2 (697 aa).

The tr-type G domain occupies 5–280 (SKYRNIGIFA…AVVDYLPAPD (276 aa)). GTP contacts are provided by residues 14–21 (AHVDAGKT), 78–82 (DTPGH), and 132–135 (NKLD).

The protein belongs to the TRAFAC class translation factor GTPase superfamily. Classic translation factor GTPase family. EF-G/EF-2 subfamily.

It localises to the cytoplasm. In terms of biological role, catalyzes the GTP-dependent ribosomal translocation step during translation elongation. During this step, the ribosome changes from the pre-translocational (PRE) to the post-translocational (POST) state as the newly formed A-site-bound peptidyl-tRNA and P-site-bound deacylated tRNA move to the P and E sites, respectively. Catalyzes the coordinated movement of the two tRNA molecules, the mRNA and conformational changes in the ribosome. The protein is Elongation factor G 2 (fusB) of Shewanella oneidensis (strain ATCC 700550 / JCM 31522 / CIP 106686 / LMG 19005 / NCIMB 14063 / MR-1).